A 195-amino-acid chain; its full sequence is MRTAEIIRNTNETRIRVAVNLDGTGKQSIDTGVPFLDHMLDQIARHGLVDLDIKAEGDLHIDAHHTVEDVGITLGMAIAKAIGNKAGLRRYGHAYVPLDEALSRVVIDFSGRPGLEYHIDFTRARIGDFDVDLTREFFQGLVNHALMTLHIDNLRGFNAHHQAETVFKAFGRALRMAMEVDPRMGDAIPSTKGVL.

It belongs to the imidazoleglycerol-phosphate dehydratase family.

The protein resides in the cytoplasm. It carries out the reaction D-erythro-1-(imidazol-4-yl)glycerol 3-phosphate = 3-(imidazol-4-yl)-2-oxopropyl phosphate + H2O. It functions in the pathway amino-acid biosynthesis; L-histidine biosynthesis; L-histidine from 5-phospho-alpha-D-ribose 1-diphosphate: step 6/9. In Bordetella avium (strain 197N), this protein is Imidazoleglycerol-phosphate dehydratase.